Reading from the N-terminus, the 454-residue chain is CBL-interacting protein kinase 33 (454 aa).

One can recognise a Protein kinase domain in the interval 13-268 (YELGRTIGEG…IPEILEDEWF (256 aa)). ATP is bound by residues 19 to 27 (IGEGTFAKV) and Lys42. Catalysis depends on Asp136, which acts as the Proton acceptor. The activation loop stretch occupies residues 154 to 183 (DFGLSALSQQIKDDGLLHTTCGTPNYVAPE). An NAF domain is found at 305–329 (EEPEALNAFELISMSAGLNLGNLFD). A PPI region spans residues 335 to 364 (KRETRFTSKCPPKEIVRKIEEAAKPLGFDV).

It belongs to the protein kinase superfamily. CAMK Ser/Thr protein kinase family. SNF1 subfamily. It depends on Mn(2+) as a cofactor.

The catalysed reaction is L-seryl-[protein] + ATP = O-phospho-L-seryl-[protein] + ADP + H(+). The enzyme catalyses L-threonyl-[protein] + ATP = O-phospho-L-threonyl-[protein] + ADP + H(+). Its function is as follows. CIPK serine-threonine protein kinases interact with CBL proteins. Binding of a CBL protein to the regulatory NAF domain of CIPK protein lead to the activation of the kinase in a calcium-dependent manner. The polypeptide is CBL-interacting protein kinase 33 (CIPK33) (Oryza sativa subsp. japonica (Rice)).